We begin with the raw amino-acid sequence, 479 residues long: U6 small nuclear RNA (adenine-(43)-N(6))-methyltransferase (479 aa).

S-adenosyl-L-methionine-binding residues include K82, G108, D131, T164, and N184. Residues 420–424 are involved in dlc-1 binding; that stretch reads DNASQ.

This sequence belongs to the methyltransferase superfamily. METTL16/RlmF family. Self-associates. Interacts with dlc-1; the interaction is direct, and is required for nuclear localization of mett-10. Expressed in the intestine, vulva, and cells of the somatic gonad including distal tip cells, gonadal sheath cells and spermatheca.

The protein localises to the nucleus. The catalysed reaction is an adenosine in mRNA + S-adenosyl-L-methionine = an N(6)-methyladenosine in mRNA + S-adenosyl-L-homocysteine + H(+). It carries out the reaction adenosine in U6 snRNA + S-adenosyl-L-methionine = N(6)-methyladenosine in U6 snRNA + S-adenosyl-L-homocysteine + H(+). In terms of biological role, RNA N6-methyltransferase that methylates adenosine residues at the N(6) position of a subset of RNAs and is involved in S-adenosyl-L-methionine homeostasis by regulating splicing of S-adenosylmethionine synthase transcripts (sams-3, sams-4 and sams-5). Able to N6-methylate a subset of mRNAs containing the 5'UACAGAAAC-3' nonamer sequence. Plays a key role in S-adenosyl-L-methionine homeostasis: under rich-diet conditions, catalyzes N6-methylation of S-adenosylmethionine synthase mRNAs (sams-3, sams-4 and sams-5), directly inhibiting splicing and protein production of S-adenosylmethionine synthase. In addition to mRNAs, also able to mediate N6-methylation of U6 small nuclear RNA (U6 snRNA). Required for gamete production, inhibiting germ cell proliferative fate and ensuring germ cell meiotic development. Also promotes progression of the mitotic cell cycle in those germ cells that continue to proliferate. Plays a role in the development of the vulva, somatic gonad and embryo. The protein is U6 small nuclear RNA (adenine-(43)-N(6))-methyltransferase of Caenorhabditis elegans.